Reading from the N-terminus, the 151-residue chain is Transcriptional repressor NrdR (151 aa).

A zinc finger lies at 3 to 34; sequence CPHCGNCDDKVMESRTLAQGDCIRRRRECLAC. Residues 49-141 form the ATP-cone domain; it reads FMVIKKDGRR…VYKQFSNLDE (93 aa).

This sequence belongs to the NrdR family. Requires Zn(2+) as cofactor.

In terms of biological role, negatively regulates transcription of bacterial ribonucleotide reductase nrd genes and operons by binding to NrdR-boxes. This chain is Transcriptional repressor NrdR, found in Treponema denticola (strain ATCC 35405 / DSM 14222 / CIP 103919 / JCM 8153 / KCTC 15104).